A 166-amino-acid polypeptide reads, in one-letter code: Spiderine-1a (166 aa).

Residues 1–18 (MKFALVLLGVCAFYLVNA) form the signal peptide. The propeptide occupies 19-58 (TGDLETELEASELQELQEALDLIGETPLESLEAEELEEAR). The interval 59-99 (KFKWGKLFSTAKKLYKKGKKLSKNKNFKKALKFGKQLAKNL) is linear cationic cytotoxin domain. The region spanning 113 to 166 (NNKCWAIGTTCSDDCDCCPEHHCHCPAGKWLPGLFRCTCQVTESDKVNKCPPAE) is the Oxytoxin-type inhibitor cystine knot (ICK) domain. Disulfide bonds link C116/C130, C123/C135, C127/C162, C129/C151, and C137/C149.

Belongs to the spiderine family. Cationic/spiderine subfamily. Expressed by the venom gland.

It is found in the secreted. Functionally, has antimicrobial, insecticidal, cytolytic and cytotoxic activity. Active against E.coli DH5alpha, E.faecalis VKM B 871, B.subtilis VKM B 501, A.globiformis VKM Ac 1112, P.aeruginosa PAO1 and S.aureus 209P in submicromolar or low micromolar ranges. Lyses human erythrocytes. Kills HeLA and A549 cells. This Oxyopes takobius (Lynx spider) protein is Spiderine-1a.